Consider the following 130-residue polypeptide: Small ribosomal subunit protein uS8 (130 aa).

The protein belongs to the universal ribosomal protein uS8 family. In terms of assembly, part of the 30S ribosomal subunit. Contacts proteins S5 and S12.

Its function is as follows. One of the primary rRNA binding proteins, it binds directly to 16S rRNA central domain where it helps coordinate assembly of the platform of the 30S subunit. The polypeptide is Small ribosomal subunit protein uS8 (Cereibacter sphaeroides (strain KD131 / KCTC 12085) (Rhodobacter sphaeroides)).